Reading from the N-terminus, the 330-residue chain is uncharacterized protein (330 aa).

Residue 125–132 coordinates ATP; that stretch reads GPPGCGKT.

This sequence belongs to the AAA ATPase family.

This is an uncharacterized protein from Sinorhizobium fredii (strain NBRC 101917 / NGR234).